Reading from the N-terminus, the 184-residue chain is Nucleoside triphosphate pyrophosphatase (184 aa).

D66 serves as the catalytic Proton acceptor.

The protein belongs to the Maf family. A divalent metal cation is required as a cofactor.

It is found in the cytoplasm. The catalysed reaction is a ribonucleoside 5'-triphosphate + H2O = a ribonucleoside 5'-phosphate + diphosphate + H(+). It catalyses the reaction a 2'-deoxyribonucleoside 5'-triphosphate + H2O = a 2'-deoxyribonucleoside 5'-phosphate + diphosphate + H(+). Its function is as follows. Nucleoside triphosphate pyrophosphatase. May have a dual role in cell division arrest and in preventing the incorporation of modified nucleotides into cellular nucleic acids. This Prochlorococcus marinus (strain MIT 9313) protein is Nucleoside triphosphate pyrophosphatase.